Reading from the N-terminus, the 474-residue chain is Trehalose-6-phosphate synthase (474 aa).

Arg-10 contacts D-glucose 6-phosphate. Residue Gly-22 to Gly-23 participates in UDP-alpha-D-glucose binding. Residues Tyr-77 and Asp-131 each coordinate D-glucose 6-phosphate. 2 residues coordinate UDP-alpha-D-glucose: Arg-263 and Lys-268. A D-glucose 6-phosphate-binding site is contributed by Arg-301. Residues Phe-340 and Leu-366–Glu-370 each bind UDP-alpha-D-glucose.

This sequence belongs to the glycosyltransferase 20 family. In terms of assembly, homotetramer.

The enzyme catalyses D-glucose 6-phosphate + UDP-alpha-D-glucose = alpha,alpha-trehalose 6-phosphate + UDP + H(+). The protein operates within glycan biosynthesis; trehalose biosynthesis. Functionally, probably involved in the osmoprotection via the biosynthesis of trehalose. Catalyzes the transfer of glucose from UDP-alpha-D-glucose (UDP-Glc) to D-glucose 6-phosphate (Glc-6-P) to form trehalose-6-phosphate. Acts with retention of the anomeric configuration of the UDP-sugar donor. This is Trehalose-6-phosphate synthase from Escherichia coli O9:H4 (strain HS).